Reading from the N-terminus, the 84-residue chain is Small ribosomal subunit protein bS20 (84 aa).

The protein belongs to the bacterial ribosomal protein bS20 family.

Binds directly to 16S ribosomal RNA. The chain is Small ribosomal subunit protein bS20 from Phocaeicola vulgatus (strain ATCC 8482 / DSM 1447 / JCM 5826 / CCUG 4940 / NBRC 14291 / NCTC 11154) (Bacteroides vulgatus).